A 498-amino-acid chain; its full sequence is ATP synthase subunit beta, chloroplastic (498 aa).

Residue 172–179 participates in ATP binding; that stretch reads GGAGVGKT.

This sequence belongs to the ATPase alpha/beta chains family. F-type ATPases have 2 components, CF(1) - the catalytic core - and CF(0) - the membrane proton channel. CF(1) has five subunits: alpha(3), beta(3), gamma(1), delta(1), epsilon(1). CF(0) has four main subunits: a(1), b(1), b'(1) and c(9-12).

It localises to the plastid. The protein localises to the chloroplast thylakoid membrane. It catalyses the reaction ATP + H2O + 4 H(+)(in) = ADP + phosphate + 5 H(+)(out). In terms of biological role, produces ATP from ADP in the presence of a proton gradient across the membrane. The catalytic sites are hosted primarily by the beta subunits. The protein is ATP synthase subunit beta, chloroplastic of Magnolia tripetala (Umbrella-tree).